An 863-amino-acid polypeptide reads, in one-letter code: DNA replication licensing factor mcm4 (863 aa).

Residues 1 to 121 are disordered; it reads MSSPTSTPSR…ARQRPDLGSA (121 aa). Composition is skewed to polar residues over residues 54–64 and 78–99; these read SPSGDLQSPSG and SALQ…SSRV. The C4-type zinc finger occupies 306 to 331; sequence CQVCAFTTRVEIDRGRISEPSVCKHC. The MCM domain maps to 458 to 667; sequence IYERLASALA…YDRRLAHHLV (210 aa). Positions 471, 497, 516, 517, 618, 643, 732, and 735 each coordinate ATP. Residues 642–645 carry the Arginine finger motif; the sequence is SRFD.

Belongs to the MCM family. In terms of assembly, component of the mcm2-7 complex (RLF-M). The complex forms a toroidal hexameric ring with the proposed subunit order mcm2-mcm6-mcm4-mcm7-mcm3-mcm5. The heterodimer of mmcm3/mcm5 interacts with mcm4, mmcm6, mcm7 and weakly with mcm2. Component of the CMG helicase complex, composed of the mcm2-7 complex, the GINS complex and cdc45. Post-translationally, hyperphosphorylated during mitosis in a mechanism requiring cdc2-cyclin B and other kinases. Undergoes dephosphorylation after exiting mitosis, existing in a partially phosphorylated state in the cytosolic interphase mcm complex which associates with the pre-replication complexes (pre-Rcs). Complete dephosphorylation inactivates the mcm complex, preventing its binding to chromatin. Becomes actively phosphorylated during S phase once the mcm complex is assembled on the chromatin. This chromatin-associated phosphorylation occurs during the activation of the pre-Rcs and is independent of cdks. Phosphorylated by the cdc7-dbf4b complex.

Its subcellular location is the nucleus. The protein localises to the chromosome. The enzyme catalyses ATP + H2O = ADP + phosphate + H(+). Functionally, acts as a component of the MCM2-7 complex (MCM complex) which is the replicative helicase essential for 'once per cell cycle' DNA replication initiation and elongation in eukaryotic cells. Core component of CDC45-MCM-GINS (CMG) helicase, the molecular machine that unwinds template DNA during replication, and around which the replisome is built. The active ATPase sites in the MCM2-7 ring are formed through the interaction surfaces of two neighboring subunits such that a critical structure of a conserved arginine finger motif is provided in trans relative to the ATP-binding site of the Walker A box of the adjacent subunit. The six ATPase active sites, however, are likely to contribute differentially to the complex helicase activity. The sequence is that of DNA replication licensing factor mcm4 from Xenopus tropicalis (Western clawed frog).